We begin with the raw amino-acid sequence, 263 residues long: Elongin-A (263 aa).

Disordered regions lie at residues 112–147 (KLEQSKQNKRIVPLEREPRAARPPKRPRPMSNYCPK) and 170–263 (SATS…PKRI). Composition is skewed to polar residues over residues 186 to 206 (RSSSNATNTSTKRPLTSNTYP) and 214 to 229 (SFTSQNFKSFNAVKTQ). The span at 230–245 (PSSSSSPSISRPTSFP) shows a compositional bias: low complexity. Positions 253–263 (SRFSSQVPKRI) are enriched in polar residues.

Belongs to the ELA1 family. In terms of assembly, heterodimer with elc1. Component of a CRL3 E3 ubiquitin ligase complex consisting of a cullin, the linker protein elc1, the substrate receptor pof4/ela1, and the RING protein rbx1. Interacts with skp1.

Functionally, as part of the CRL3 E3 ubiquitin ligase complex; polyubiquitylates monoubiquitylated RNA polymerase II subunit rpb1 to trigger its proteolysis; plays a role in global genomic repair. The polypeptide is Elongin-A (pof4) (Schizosaccharomyces pombe (strain 972 / ATCC 24843) (Fission yeast)).